A 345-amino-acid polypeptide reads, in one-letter code: Methylthioribose-1-phosphate isomerase (345 aa).

Substrate-binding positions include 47–49 (RGA), arginine 90, and glutamine 197. Catalysis depends on aspartate 238, which acts as the Proton donor. Substrate is bound at residue 248-249 (NK).

The protein belongs to the eIF-2B alpha/beta/delta subunits family. MtnA subfamily.

The catalysed reaction is 5-(methylsulfanyl)-alpha-D-ribose 1-phosphate = 5-(methylsulfanyl)-D-ribulose 1-phosphate. Its pathway is amino-acid biosynthesis; L-methionine biosynthesis via salvage pathway; L-methionine from S-methyl-5-thio-alpha-D-ribose 1-phosphate: step 1/6. Catalyzes the interconversion of methylthioribose-1-phosphate (MTR-1-P) into methylthioribulose-1-phosphate (MTRu-1-P). The sequence is that of Methylthioribose-1-phosphate isomerase from Caldanaerobacter subterraneus subsp. tengcongensis (strain DSM 15242 / JCM 11007 / NBRC 100824 / MB4) (Thermoanaerobacter tengcongensis).